Reading from the N-terminus, the 352-residue chain is C-C chemokine receptor type 5 (352 aa).

The Extracellular portion of the chain corresponds to 1–30; the sequence is MDYQVSSPTYDIDYYTSEPCQKVNVKQIAA. Tyr3 is subject to Sulfotyrosine. O-linked (GalNAc...) serine glycosylation is found at Ser6 and Ser7. Sulfotyrosine is present on residues Tyr10, Tyr14, and Tyr15. Cystine bridges form between Cys20–Cys269 and Cys101–Cys178. A helical transmembrane segment spans residues 31–58; the sequence is RLLPPLYSLVFIFGFVGNILVVLILINC. The Cytoplasmic portion of the chain corresponds to 59–68; it reads KRLKSMTDIY. The helical transmembrane segment at 69 to 89 threads the bilayer; the sequence is LLNLAISDLFFLLTVPFWAHY. The Extracellular portion of the chain corresponds to 90-102; it reads AAAQWDFGNTMCQ. The chain crosses the membrane as a helical span at residues 103–124; it reads LLTGLYFIGFFSGIFFIILLTI. Over 125–141 the chain is Cytoplasmic; sequence DRYLAIVHAVFALKART. A helical membrane pass occupies residues 142-166; it reads VTFGVVTSVITWVVAVFASLPGIIF. Residues 167 to 198 lie on the Extracellular side of the membrane; it reads TRSQREGLHYTCSSHFPYSQYQFWKNFQTLKI. The helical transmembrane segment at 199 to 218 threads the bilayer; it reads VILGLVLPLLIMVICYSGIL. Over 219 to 235 the chain is Cytoplasmic; the sequence is KTLLRCRNEKKRHRAVR. A helical transmembrane segment spans residues 236-260; that stretch reads LIFTIMIVYFLFWAPYNIVLLLNTF. The Extracellular portion of the chain corresponds to 261–277; the sequence is QEFFGLNNCSSSNRLDQ. A helical transmembrane segment spans residues 278–301; the sequence is AMQVTETLGMTHCCINPIIYAFVG. Residues 302-352 lie on the Cytoplasmic side of the membrane; that stretch reads EKFRNYLLVFFQKHIAKRFCKCCSIFQQEAPERASSVYTRSTGEHEISVGL. S-palmitoyl cysteine attachment occurs at residues Cys321, Cys323, and Cys324. Residues Ser336, Ser337, Ser342, and Ser349 each carry the phosphoserine; by BARK1 modification.

This sequence belongs to the G-protein coupled receptor 1 family. In terms of assembly, interacts with PRAF2. Efficient ligand binding to CCL3/MIP-1alpha and CCL4/MIP-1beta requires sulfation, O-glycosylation and sialic acid modifications. Glycosylation on Ser-6 is required for efficient binding of CCL4. Interacts with GRK2. Interacts with ARRB1 and ARRB2. Interacts with CNIH4. Interacts with S100A4; this interaction stimulates T-lymphocyte chemotaxis. Sulfated on at least 2 of the N-terminal tyrosines. Sulfation is required for efficient binding of the chemokines, CCL3 and CCL4. In terms of processing, palmitoylation in the C-terminal is important for cell surface expression. Post-translationally, phosphorylation on serine residues in the C-terminal is stimulated by binding CC chemokines especially by APO-RANTES. O-glycosylated, but not N-glycosylated. Ser-6 appears to be the major site even if Ser-7 may be also O-glycosylated. Also sialylated glycans present which contribute to chemokine binding. Thr-16 and Ser-17 may also be glycosylated and, if so, with small moieties such as a T-antigen.

It is found in the cell membrane. Functionally, receptor for a number of inflammatory CC-chemokines including CCL3/MIP-1-alpha, CCL4/MIP-1-beta and RANTES and subsequently transduces a signal by increasing the intracellular calcium ion level. May play a role in the control of granulocytic lineage proliferation or differentiation. Participates in T-lymphocyte migration to the infection site by acting as a chemotactic receptor. The chain is C-C chemokine receptor type 5 (CCR5) from Pygathrix nemaeus (Red-shanked douc langur).